Reading from the N-terminus, the 258-residue chain is MAVISMKQLLEAGVHFGHQTRRWNPKMKKYIFTERNGIYIIDLQKTVKKVDEAYNFLKQVSEDGGQVLFVGTKKQAQESVKSEAERAGQFYINQRWLGGLLTNYKTISKRIKRISEIEKMEEDGLFEVLPKKEVVELKKEYDRLIKFLGGIRDMKSMPQALFVVDPRKERNAIAEARKLNIPIVGIVDTNCDPDEIDYVIPANDDAIRAVKLLTAKMADAILEGQQGVSNEEVAAEQNIDLDEKEKSEETEATEATEE.

The segment at 226–258 is disordered; the sequence is QGVSNEEVAAEQNIDLDEKEKSEETEATEATEE.

It belongs to the universal ribosomal protein uS2 family.

In Staphylococcus aureus (strain COL), this protein is Small ribosomal subunit protein uS2.